Here is a 405-residue protein sequence, read N- to C-terminus: Argininosuccinate synthase (405 aa).

8–16 (AYSGGLDTS) lines the ATP pocket. 2 residues coordinate L-citrulline: Y86 and S91. G116 contributes to the ATP binding site. L-aspartate-binding residues include T118, N122, and D123. L-citrulline is bound at residue N122. R126, S175, S184, E260, and Y272 together coordinate L-citrulline.

It belongs to the argininosuccinate synthase family. Type 1 subfamily. Homotetramer.

The protein resides in the cytoplasm. It carries out the reaction L-citrulline + L-aspartate + ATP = 2-(N(omega)-L-arginino)succinate + AMP + diphosphate + H(+). It functions in the pathway amino-acid biosynthesis; L-arginine biosynthesis; L-arginine from L-ornithine and carbamoyl phosphate: step 2/3. This chain is Argininosuccinate synthase, found in Koribacter versatilis (strain Ellin345).